Consider the following 81-residue polypeptide: UPF0180 protein BLi01634/BL05144 (81 aa).

This sequence belongs to the UPF0180 family.

This chain is UPF0180 protein BLi01634/BL05144, found in Bacillus licheniformis (strain ATCC 14580 / DSM 13 / JCM 2505 / CCUG 7422 / NBRC 12200 / NCIMB 9375 / NCTC 10341 / NRRL NRS-1264 / Gibson 46).